Reading from the N-terminus, the 463-residue chain is MAATRTETDTFGPIDVPADRYWGAQTQRSLQNFRIGGERMPLPLVHALGVVKRAAAETNIALGKLDPVLGQVIAVAASEVIEGKLDDHFPLVVWQTGSGTQSNMNANEVISNRAIELLGGEMGSKKPIHPNDHVNMSQSSNDSFPTAIHIATAVETVNRLYPALEHLTKALKVKEEAFKDIIKIGRTHTQDATPVTLGQEFSGYRAALEYARHRLEQSLADVFLLAQGGTAVGTGLNAPVGFDKGFAEAVSEITGLSFKTAPNKFEALASHGAVLNFHGSLNALAADLFKIANDIRFLGSGPRSGLGELSLPENEPGSSIMPGKVNPTQAEAMTMVATQVFGNQTAVTVAASQGHFELNVFKPVIAYNVLQSIRLLSDTMVSFADHCVEGIEPNTARIKELLERSLMLVTALAPAIGYDNAARIAKTAHKNGTTLREEALASGLVSEEDYDRLVRAERMIAPQ.

Residues 98-100 (SGT), 129-132 (HPND), 139-141 (SSN), and Thr187 each bind substrate. The active-site Proton donor/acceptor is the His188. The active site involves Ser318. Substrate is bound by residues Ser319 and 324–326 (KVN).

This sequence belongs to the class-II fumarase/aspartase family. Fumarase subfamily. In terms of assembly, homotetramer.

The protein resides in the cytoplasm. The enzyme catalyses (S)-malate = fumarate + H2O. It participates in carbohydrate metabolism; tricarboxylic acid cycle; (S)-malate from fumarate: step 1/1. Functionally, involved in the TCA cycle. Catalyzes the stereospecific interconversion of fumarate to L-malate. This Brucella melitensis biotype 1 (strain ATCC 23456 / CCUG 17765 / NCTC 10094 / 16M) protein is Fumarate hydratase class II.